The sequence spans 305 residues: Ribosomal RNA small subunit methyltransferase H (305 aa).

Residues 37–39 (GGH), D57, F85, D101, and H108 each bind S-adenosyl-L-methionine.

This sequence belongs to the methyltransferase superfamily. RsmH family.

It is found in the cytoplasm. The catalysed reaction is cytidine(1402) in 16S rRNA + S-adenosyl-L-methionine = N(4)-methylcytidine(1402) in 16S rRNA + S-adenosyl-L-homocysteine + H(+). Functionally, specifically methylates the N4 position of cytidine in position 1402 (C1402) of 16S rRNA. The sequence is that of Ribosomal RNA small subunit methyltransferase H from Parabacteroides distasonis (strain ATCC 8503 / DSM 20701 / CIP 104284 / JCM 5825 / NCTC 11152).